The sequence spans 858 residues: Envelope glycoprotein gp160 (858 aa).

A signal peptide spans Met1–Cys19. The Extracellular portion of the chain corresponds to Thr20–Tyr679. Asn34 is a glycosylation site (N-linked (GlcNAc...) asparagine; by host). An intrachain disulfide couples Cys41 to Cys54. N-linked (GlcNAc...) asparagine; by host glycosylation is found at Asn67, Asn76, Asn119, Asn120, Asn151, Asn166, Asn179, Asn192, Asn193, Asn196, Asn206, Asn238, Asn241, Asn248, Asn272, Asn278, Asn289, Asn300, Asn310, Asn367, Asn371, Asn400, Asn410, Asn447, Asn463, and Asn466. 5 disulfides stabilise this stretch: Cys98-Cys214, Cys105-Cys205, Cys110-Cys163, Cys227-Cys257, and Cys237-Cys249. The segment at Cys110–Asn162 is V1. Residues Ser111 to Thr134 are compositionally biased toward low complexity. The disordered stretch occupies residues Ser111–Glu142. A V2 region spans residues Cys163–Cys205. Residues Cys305–Trp339 are V3. A disulfide bridge links Cys305 with Cys340. 2 disulfide bridges follow: Cys392–Cys446 and Cys399–Cys419. Positions Cys399 to Cys419 are V4. The tract at residues Asn462–Phe469 is V5. The interval Gly512–Ala532 is fusion peptide. The tract at residues Leu575–Arg591 is immunosuppression. 3 N-linked (GlcNAc...) asparagine; by host glycosylation sites follow: Asn611, Asn620, and Asn636. Residues Gln624–Gln645 are a coiled coil. The MPER; binding to GalCer stretch occupies residues Lys657–Gln678. Residues Gly680–Leu700 traverse the membrane as a helical segment. At Ser701–Leu858 the chain is on the cytoplasmic side. The short motif at Tyr707–Val710 is the YXXV motif; contains endocytosis signal element. Cys773 carries the S-palmitoyl cysteine; by host lipid modification. The short motif at Leu857–Leu858 is the Di-leucine internalization motif element.

As to quaternary structure, the mature envelope protein (Env) consists of a homotrimer of non-covalently associated gp120-gp41 heterodimers. The resulting complex protrudes from the virus surface as a spike. There seems to be as few as 10 spikes on the average virion. Interacts with human CD4, CCR5 and CXCR4, to form a P4HB/PDI-CD4-CXCR4-gp120 complex. Gp120 also interacts with the C-type lectins CD209/DC-SIGN and CLEC4M/DC-SIGNR (collectively referred to as DC-SIGN(R)). Gp120 and gp41 interact with GalCer. In terms of assembly, the mature envelope protein (Env) consists of a homotrimer of non-covalently associated gp120-gp41 heterodimers. The resulting complex protrudes from the virus surface as a spike. There seems to be as few as 10 spikes on the average virion. In terms of processing, specific enzymatic cleavages in vivo yield mature proteins. Envelope glycoproteins are synthesized as an inactive precursor that is heavily N-glycosylated and processed likely by host cell furin in the Golgi to yield the mature SU and TM proteins. The cleavage site between SU and TM requires the minimal sequence [KR]-X-[KR]-R. Palmitoylation of the transmembrane protein and of Env polyprotein (prior to its proteolytic cleavage) is essential for their association with host cell membrane lipid rafts. Palmitoylation is therefore required for envelope trafficking to classical lipid rafts, but not for viral replication.

It localises to the virion membrane. The protein localises to the host cell membrane. Its subcellular location is the host endosome membrane. The surface protein gp120 (SU) attaches the virus to the host lymphoid cell by binding to the primary receptor CD4. This interaction induces a structural rearrangement creating a high affinity binding site for a chemokine coreceptor like CXCR4 and/or CCR5. This peculiar 2 stage receptor-interaction strategy allows gp120 to maintain the highly conserved coreceptor-binding site in a cryptic conformation, protected from neutralizing antibodies. Since CD4 also displays a binding site for the disulfide-isomerase P4HB/PDI, a P4HB/PDI-CD4-CXCR4-gp120 complex may form. In that complex, P4HB/PDI could reach and reduce gp120 disulfide bonds, causing major conformational changes in gp120. TXN, another PDI family member could also be involved in disulfide rearrangements in Env during fusion. These changes are transmitted to the transmembrane protein gp41 and are thought to activate its fusogenic potential by unmasking its fusion peptide. Functionally, the surface protein gp120 is a ligand for CD209/DC-SIGN and CLEC4M/DC-SIGNR, which are respectively found on dendritic cells (DCs), and on endothelial cells of liver sinusoids and lymph node sinuses. These interactions allow capture of viral particles at mucosal surfaces by these cells and subsequent transmission to permissive cells. DCs are professional antigen presenting cells, critical for host immunity by inducing specific immune responses against a broad variety of pathogens. They act as sentinels in various tissues where they take up antigen, process it, and present it to T-cells following migration to lymphoid organs. HIV subverts the migration properties of dendritic cells to gain access to CD4+ T-cells in lymph nodes. Virus transmission to permissive T-cells occurs either in trans (without DCs infection, through viral capture and transmission), or in cis (following DCs productive infection, through the usual CD4-gp120 interaction), thereby inducing a robust infection. In trans infection, bound virions remain infectious over days and it is proposed that they are not degraded, but protected in non-lysosomal acidic organelles within the DCs close to the cell membrane thus contributing to the viral infectious potential during DCs' migration from the periphery to the lymphoid tissues. On arrival at lymphoid tissues, intact virions recycle back to DCs' cell surface allowing virus transmission to CD4+ T-cells. Virion capture also seems to lead to MHC-II-restricted viral antigen presentation, and probably to the activation of HIV-specific CD4+ cells. Its function is as follows. The transmembrane protein gp41 (TM) acts as a class I viral fusion protein. Under the current model, the protein has at least 3 conformational states: pre-fusion native state, pre-hairpin intermediate state, and post-fusion hairpin state. During fusion of viral and target intracellular membranes, the coiled coil regions (heptad repeats) assume a trimer-of-hairpins structure, positioning the fusion peptide in close proximity to the C-terminal region of the ectodomain. The formation of this structure appears to drive apposition and subsequent fusion of viral and target cell membranes. Complete fusion occurs in host cell endosomes and is dynamin-dependent, however some lipid transfer might occur at the plasma membrane. The virus undergoes clathrin-dependent internalization long before endosomal fusion, thus minimizing the surface exposure of conserved viral epitopes during fusion and reducing the efficacy of inhibitors targeting these epitopes. Membranes fusion leads to delivery of the nucleocapsid into the cytoplasm. In terms of biological role, the envelope glycoprotein gp160 precursor down-modulates cell surface CD4 antigen by interacting with it in the endoplasmic reticulum and blocking its transport to the cell surface. The gp120-gp41 heterodimer seems to contribute to T-cell depletion during HIV-1 infection. The envelope glycoproteins expressed on the surface of infected cells induce apoptosis through an interaction with uninfected cells expressing the receptor (CD4) and the coreceptors CXCR4 or CCR5. This type of bystander killing may be obtained by at least three distinct mechanisms. First, the interaction between the 2 cells can induce cellular fusion followed by nuclear fusion within the syncytium. Syncytia are condemned to die from apoptosis. Second, the 2 interacting cells may not fuse entirely and simply exchange plasma membrane lipids, after a sort of hemifusion process, followed by rapid death. Third, it is possible that virus-infected cells, on the point of undergoing apoptosis, fuse with CD4-expressing cells, in which case apoptosis is rapidly transmitted from one cell to the other and thus occurs in a sort of contagious fashion. Functionally, the gp120-gp41 heterodimer allows rapid transcytosis of the virus through CD4 negative cells such as simple epithelial monolayers of the intestinal, rectal and endocervical epithelial barriers. Both gp120 and gp41 specifically recognize glycosphingolipids galactosyl-ceramide (GalCer) or 3' sulfo-galactosyl-ceramide (GalS) present in the lipid rafts structures of epithelial cells. Binding to these alternative receptors allows the rapid transcytosis of the virus through the epithelial cells. This transcytotic vesicle-mediated transport of virions from the apical side to the basolateral side of the epithelial cells does not involve infection of the cells themselves. The sequence is that of Envelope glycoprotein gp160 (env) from Homo sapiens (Human).